The primary structure comprises 294 residues: Elongation factor Ts (294 aa).

Residues 79-82 form an involved in Mg(2+) ion dislocation from EF-Tu region; sequence TDFV.

This sequence belongs to the EF-Ts family.

It is found in the cytoplasm. Its function is as follows. Associates with the EF-Tu.GDP complex and induces the exchange of GDP to GTP. It remains bound to the aminoacyl-tRNA.EF-Tu.GTP complex up to the GTP hydrolysis stage on the ribosome. This Geobacillus thermodenitrificans (strain NG80-2) protein is Elongation factor Ts.